Here is an 89-residue protein sequence, read N- to C-terminus: Large ribosomal subunit protein bL27 (89 aa).

Belongs to the bacterial ribosomal protein bL27 family.

This is Large ribosomal subunit protein bL27 from Cereibacter sphaeroides (strain ATCC 17029 / ATH 2.4.9) (Rhodobacter sphaeroides).